Here is a 307-residue protein sequence, read N- to C-terminus: tRNA N6-adenosine threonylcarbamoyltransferase (307 aa).

Residues histidine 108 and histidine 112 each contribute to the Fe cation site. Substrate contacts are provided by residues isoleucine 131 to glycine 135, aspartate 164, glycine 177, aspartate 181, and asparagine 266. Aspartate 290 lines the Fe cation pocket.

The protein belongs to the KAE1 / TsaD family. It depends on Fe(2+) as a cofactor.

It is found in the cytoplasm. The enzyme catalyses L-threonylcarbamoyladenylate + adenosine(37) in tRNA = N(6)-L-threonylcarbamoyladenosine(37) in tRNA + AMP + H(+). Functionally, required for the formation of a threonylcarbamoyl group on adenosine at position 37 (t(6)A37) in tRNAs that read codons beginning with adenine. Is involved in the transfer of the threonylcarbamoyl moiety of threonylcarbamoyl-AMP (TC-AMP) to the N6 group of A37, together with TsaE and TsaB. TsaD likely plays a direct catalytic role in this reaction. This is tRNA N6-adenosine threonylcarbamoyltransferase from Mycoplasmopsis synoviae (strain 53) (Mycoplasma synoviae).